The chain runs to 107 residues: Ferredoxin CarAc (107 aa).

Residues 6–102 (LKVCAASDMQ…VEVKEGEVYV (97 aa)) enclose the Rieske domain. 4 residues coordinate [2Fe-2S] cluster: Cys46, His48, Cys65, and His68.

In terms of assembly, monomer. Carbazole 1,9a-dioxygenase complex consists of a terminal oxygenase component CarAa, a ferredoxin reductase component CarAd and a ferredoxin component CarAc. [2Fe-2S] cluster is required as a cofactor.

Its function is as follows. Part of the multicomponent carbazole 1,9a-dioxygenase (CARDO), that converts carbazole (CAR) into 2-aminobiphenyl-2,3-diol. Acts as a mediator in the electron transfer from CarAd to CarAa. The sequence is that of Ferredoxin CarAc (carAc) from Metapseudomonas resinovorans (Pseudomonas resinovorans).